Consider the following 252-residue polypeptide: Large ribosomal subunit protein uL29m (252 aa).

Lys146 is modified (N6-acetyllysine). Positions 230 to 240 are enriched in basic residues; sequence KKKEKILHAKF. A disordered region spans residues 230–252; the sequence is KKKEKILHAKFPHLSQERKSSSV.

This sequence belongs to the universal ribosomal protein uL29 family. As to quaternary structure, component of the mitochondrial ribosome large subunit (39S) which comprises a 16S rRNA and about 50 distinct proteins.

The protein localises to the mitochondrion. This is Large ribosomal subunit protein uL29m (Mrpl47) from Mus musculus (Mouse).